Reading from the N-terminus, the 200-residue chain is Transcription factor FapR (200 aa).

The protein belongs to the FapR family.

Its function is as follows. Transcriptional factor involved in regulation of membrane lipid biosynthesis by repressing genes involved in fatty acid and phospholipid metabolism. This chain is Transcription factor FapR, found in Caldanaerobacter subterraneus subsp. tengcongensis (strain DSM 15242 / JCM 11007 / NBRC 100824 / MB4) (Thermoanaerobacter tengcongensis).